Here is a 285-residue protein sequence, read N- to C-terminus: MMEAIKKKMQMLKLDKENALDRAEQAEAEQKQAEERSKQLEDELAAMQKKLKGTEDELDKYSEALKDAQEKLELAEKKAADAEAEVASLNRRIQLVEEELDRAQERLATALQKLEEAEKAADESERGMKVIENRALKDEEKMELQEIQLKEAKHIAEEADRKYEEVARKLVIIEGDLERTEERAELAESKCSELEEELKNVTNNLKSLEAQAEKYSQKEDKYEEEIKILTDKLKEAETRAEFAERSVAKLEKTIDDLEDELYAQKLKYKAISEELDHALNDMTSI.

The stretch at 1–285 (MMEAIKKKMQ…DHALNDMTSI (285 aa)) forms a coiled coil. Residue Met-2 is modified to N-acetylmethionine. The residue at position 2 (Met-2) is an N-acetylalanine. A compositionally biased stretch (basic and acidic residues) spans 16–41 (KENALDRAEQAEAEQKQAEERSKQLE). Positions 16-44 (KENALDRAEQAEAEQKQAEERSKQLEDEL) are disordered. Thr-54 carries the post-translational modification Phosphothreonine. A phosphoserine mark is found at Ser-62 and Ser-88. The residue at position 109 (Thr-109) is a Phosphothreonine. Glu-125 and Leu-177 each carry N6-acetyllysine. Ser-207 is modified (phosphoserine). Tyr-215 is modified (N6-acetyllysine). A Phosphoserine modification is found at Ser-216. Thr-253 carries the post-translational modification Phosphothreonine. At Tyr-262 the chain carries Phosphotyrosine. Ser-272 is modified (phosphoserine). Thr-283 is modified (phosphothreonine). Ser-284 bears the Phosphoserine mark.

Belongs to the tropomyosin family. As to quaternary structure, homodimer. Heterodimer of an alpha (TPM1, TPM3 or TPM4) and a beta (TPM2) chain. Interacts with TMOD1. Interacts with TNNT1.

The protein resides in the cytoplasm. The protein localises to the cytoskeleton. Functionally, binds to actin filaments in muscle and non-muscle cells. Plays a central role, in association with the troponin complex, in the calcium dependent regulation of vertebrate striated muscle contraction. Smooth muscle contraction is regulated by interaction with caldesmon. In non-muscle cells is implicated in stabilizing cytoskeleton actin filaments. This chain is Tropomyosin alpha-3 chain (TPM3), found in Homo sapiens (Human).